Consider the following 95-residue polypeptide: Aspartyl/glutamyl-tRNA(Asn/Gln) amidotransferase subunit C (95 aa).

Belongs to the GatC family. In terms of assembly, heterotrimer of A, B and C subunits.

The catalysed reaction is L-glutamyl-tRNA(Gln) + L-glutamine + ATP + H2O = L-glutaminyl-tRNA(Gln) + L-glutamate + ADP + phosphate + H(+). It catalyses the reaction L-aspartyl-tRNA(Asn) + L-glutamine + ATP + H2O = L-asparaginyl-tRNA(Asn) + L-glutamate + ADP + phosphate + 2 H(+). Its function is as follows. Allows the formation of correctly charged Asn-tRNA(Asn) or Gln-tRNA(Gln) through the transamidation of misacylated Asp-tRNA(Asn) or Glu-tRNA(Gln) in organisms which lack either or both of asparaginyl-tRNA or glutaminyl-tRNA synthetases. The reaction takes place in the presence of glutamine and ATP through an activated phospho-Asp-tRNA(Asn) or phospho-Glu-tRNA(Gln). This Nitrosomonas europaea (strain ATCC 19718 / CIP 103999 / KCTC 2705 / NBRC 14298) protein is Aspartyl/glutamyl-tRNA(Asn/Gln) amidotransferase subunit C.